A 359-amino-acid chain; its full sequence is MVRLSNLVSCLGLASAVTAAVVDLVPKNFDDVVLKSGKPALVEFFAPWCGHCKNLAPVYEELGQAFAHASDKVTVGKVDADEHRDLGRKFGVQGFPTLKWFDGKSDEPEDYKGGRDLESLSSFISEKTGVKPRGPKKEPSKVEMLNDATFKGAVGGDNDVLVAFTAPWCGHCKNLAPTWEALANDFVLEPNVVIAKVDADAENGKATAREQGVSGYPTIKFFPKGSTESVPYEGARSEQAFIDFLNEKTGTHRTVGGGLDTKAGTIASLDELIASTSAADLAAAVKKAATELKDKYAQYYVKVADKLSQNAEYAAKELARLEKILAKGGSAPEKVDDLISRSNILRKFVGEEKEAKDEL.

An N-terminal signal peptide occupies residues M1–A19. Thioredoxin domains are found at residues A20 to G129 and K131 to G250. Residues C49, C52, C169, and C172 each act as nucleophile in the active site. 2 disulfide bridges follow: C49/C52 and C169/C172. A Prevents secretion from ER motif is present at residues K356–L359.

This sequence belongs to the protein disulfide isomerase family.

The protein localises to the endoplasmic reticulum lumen. The catalysed reaction is Catalyzes the rearrangement of -S-S- bonds in proteins.. This is Protein disulfide-isomerase tigA (tigA) from Aspergillus niger.